The following is a 129-amino-acid chain: MKNDTLNDVINSIKNASRLGKREIIAEPAAKLIGKVLKVMQDYNYIKSFEVIDESRGGKFKIVLNTTINNCGVIKPRFPVKNENLEKYEARYLPAEDFGILILTTTKGVMSNIEARKLGIGGKLLAYVY.

Belongs to the universal ribosomal protein uS8 family. Part of the 30S ribosomal subunit.

One of the primary rRNA binding proteins, it binds directly to 16S rRNA central domain where it helps coordinate assembly of the platform of the 30S subunit. This is Small ribosomal subunit protein uS8 from Thermoplasma acidophilum (strain ATCC 25905 / DSM 1728 / JCM 9062 / NBRC 15155 / AMRC-C165).